An 817-amino-acid polypeptide reads, in one-letter code: Sorting nexin-29 (817 aa).

In terms of domain architecture, RUN spans 37–181 (SDSDSRVTCL…ILFAINIDNK (145 aa)). Residues Ser269, Ser292, Ser293, Ser331, and Ser345 each carry the phosphoserine modification. The segment at 271–299 (DDEEDEQSSGDVFKKIPGAGESSEENSDR) is disordered. 2 disordered regions span residues 344 to 381 (KSID…LDAG) and 417 to 460 (APLG…LPSA). Residues 347–358 (DDEDADENEDDV) are compositionally biased toward acidic residues. Basic and acidic residues predominate over residues 369–378 (GHSESPEKPL). Low complexity predominate over residues 445 to 460 (SPPGQESPLSSLLPSA). Ser451 bears the Phosphoserine mark. The stretch at 466 to 546 (MTVSDLRQAI…VLKVQLKKYV (81 aa)) forms a coiled coil. At Ser641 the chain carries Phosphoserine. The residue at position 643 (Thr643) is a Phosphothreonine. Residues Ser644 and Ser648 each carry the phosphoserine modification. In terms of domain architecture, PX spans 658–781 (ALINVWIPSV…PFFVDITPPG (124 aa)). A disordered region spans residues 784-817 (LTKNSRPKVASRFPKLARGHPRETRNVEPQSGDL).

The protein belongs to the sorting nexin family.

This Bos taurus (Bovine) protein is Sorting nexin-29 (SNX29).